We begin with the raw amino-acid sequence, 258 residues long: tRNA pseudouridine synthase A (258 aa).

Asp52 serves as the catalytic Nucleophile. Residue Tyr111 coordinates substrate.

Belongs to the tRNA pseudouridine synthase TruA family. Homodimer.

It catalyses the reaction uridine(38/39/40) in tRNA = pseudouridine(38/39/40) in tRNA. Formation of pseudouridine at positions 38, 39 and 40 in the anticodon stem and loop of transfer RNAs. In Azorhizobium caulinodans (strain ATCC 43989 / DSM 5975 / JCM 20966 / LMG 6465 / NBRC 14845 / NCIMB 13405 / ORS 571), this protein is tRNA pseudouridine synthase A.